Consider the following 271-residue polypeptide: Methylcorrinoid:tetrahydrofolate methyltransferase (271 aa).

Residues Met-1–Leu-247 form the Pterin-binding domain.

It belongs to the vitamin-B12 dependent methionine synthase family. As to quaternary structure, the proline betaine:THF methyl transfer system is composed of two methyltransferases, MtpB and MtqA, and the corrinoid protein MtqC. The L-carnitine:THF methyl transfer system is composed of two methyltransferases, MtcB and MtqA, and the corrinoid protein MtqC.

The catalysed reaction is methyl-Co(III)-[quaternary-amine-specific corrinoid protein] + (6S)-5,6,7,8-tetrahydrofolate = Co(I)-[quaternary-amine-specific corrinoid protein] + (6S)-5-methyl-5,6,7,8-tetrahydrofolate + H(+). In terms of biological role, involved in the degradation of the quaternary amines L-proline betaine and L-carnitine. Component of a corrinoid-dependent methyltransferase system that transfers a methyl group from L-proline betaine or L-carnitine to tetrahydrofolate (THF), forming methyl-THF, a key intermediate in the Wood-Ljungdahl acetogenesis pathway. MtqA catalyzes the transfer of a methyl group from the methylated corrinoid protein MtqC to THF, forming methyl-THF. This chain is Methylcorrinoid:tetrahydrofolate methyltransferase, found in Eubacterium limosum.